The primary structure comprises 272 residues: MQQDPPTSQPHTPQIVDGVKPRGWVDHPAGLHFEYLGIADSRPTRTEYNECWAHQREVHAEVSAHQRPNTVIYVEHDPVYTAGRRTRKEAYPFDGTPVVPVDRGGEITWHGPGQLVGYPIVFLQRGIGVVDYVRRVEEAVIRLVSQYGLRAGRVPGRTGVWFPSDGMGPERKVCAIGIRVSRQTAMHGFALNIDPDTAGFDNIIPCGISDADVTSMARELRRLHGPDAEVPSLLEVAGNLEPILTEMMSFQPYEMSPDIPRREHPAFLHPMP.

A compositionally biased stretch (polar residues) spans 1–12; the sequence is MQQDPPTSQPHT. The disordered stretch occupies residues 1 to 20; that stretch reads MQQDPPTSQPHTPQIVDGVK. The BPL/LPL catalytic domain maps to 65–255; that stretch reads HQRPNTVIYV…EMMSFQPYEM (191 aa). Substrate contacts are provided by residues 103–110, 175–177, and 188–190; these read RGGEITWH, AIG, and GFA. Cysteine 206 acts as the Acyl-thioester intermediate in catalysis.

This sequence belongs to the LipB family.

The protein localises to the cytoplasm. The catalysed reaction is octanoyl-[ACP] + L-lysyl-[protein] = N(6)-octanoyl-L-lysyl-[protein] + holo-[ACP] + H(+). It functions in the pathway protein modification; protein lipoylation via endogenous pathway; protein N(6)-(lipoyl)lysine from octanoyl-[acyl-carrier-protein]: step 1/2. Its function is as follows. Catalyzes the transfer of endogenously produced octanoic acid from octanoyl-acyl-carrier-protein onto the lipoyl domains of lipoate-dependent enzymes. Lipoyl-ACP can also act as a substrate although octanoyl-ACP is likely to be the physiological substrate. The protein is Octanoyltransferase of Cutibacterium acnes (strain DSM 16379 / KPA171202) (Propionibacterium acnes).